The sequence spans 1361 residues: Protein CFT1 (1361 aa).

Positions 455-493 (AAYNNEDDDDDDDDFNLYSDEENDQVNNKNDRTFGTNES) are disordered. Residues 459-478 (NEDDDDDDDDFNLYSDEEND) show a composition bias toward acidic residues. Over residues 479–493 (QVNNKNDRTFGTNES) the composition is skewed to polar residues.

It belongs to the CFT1 family.

Its subcellular location is the nucleus. In terms of biological role, RNA-binding component of the cleavage and polyadenylation factor (CPF) complex, which plays a key role in polyadenylation-dependent pre-mRNA 3'-end formation and cooperates with cleavage factors including the CFIA complex and NAB4/CFIB. Involved in poly(A) site recognition. May be involved in coupling transcription termination and mRNA 3'-end formation. This is Protein CFT1 (CFT1) from Candida glabrata (strain ATCC 2001 / BCRC 20586 / JCM 3761 / NBRC 0622 / NRRL Y-65 / CBS 138) (Yeast).